The primary structure comprises 378 residues: Ribosomal RNA large subunit methyltransferase G (378 aa).

This sequence belongs to the methyltransferase superfamily. RlmG family.

It is found in the cytoplasm. The enzyme catalyses guanosine(1835) in 23S rRNA + S-adenosyl-L-methionine = N(2)-methylguanosine(1835) in 23S rRNA + S-adenosyl-L-homocysteine + H(+). Specifically methylates the guanine in position 1835 (m2G1835) of 23S rRNA. The protein is Ribosomal RNA large subunit methyltransferase G of Escherichia coli O139:H28 (strain E24377A / ETEC).